Reading from the N-terminus, the 442-residue chain is tRNA modification GTPase MnmE (442 aa).

(6S)-5-formyl-5,6,7,8-tetrahydrofolate contacts are provided by arginine 27, glutamate 84, and lysine 124. Residues 221–366 form the TrmE-type G domain; sequence GLHVVIVGAP…LLDALQAFAE (146 aa). GTP contacts are provided by residues 231 to 236, 250 to 256, and 275 to 278; these read NAGKSS, SEEAGTT, and DTAG. Mg(2+)-binding residues include serine 235 and threonine 256. Lysine 442 provides a ligand contact to (6S)-5-formyl-5,6,7,8-tetrahydrofolate.

It belongs to the TRAFAC class TrmE-Era-EngA-EngB-Septin-like GTPase superfamily. TrmE GTPase family. In terms of assembly, homodimer. Heterotetramer of two MnmE and two MnmG subunits. It depends on K(+) as a cofactor.

It is found in the cytoplasm. Its function is as follows. Exhibits a very high intrinsic GTPase hydrolysis rate. Involved in the addition of a carboxymethylaminomethyl (cmnm) group at the wobble position (U34) of certain tRNAs, forming tRNA-cmnm(5)s(2)U34. The protein is tRNA modification GTPase MnmE of Brucella ovis (strain ATCC 25840 / 63/290 / NCTC 10512).